The primary structure comprises 255 residues: MTSANDTVNKQAVASAFSRAAGSYDAAAALQRDVGERLLGMGSSHPGEQLLDAGCGTGYFSRMWRERGKRVTALDLAPGMLDVARQRQAAHHYLLGDIEQVPLPDAAMDICFSSLVVQWCSDLPAALAELYRVTRPGGVILFSTLAAGSLQELGDAWQQVDGERHVNAFLPLTQIRTACAAYRHELVTELRTLNYPDVMTLMRSLKGIGATHLHQGREGGLMSRGRLAALQAAYPCRQGQFPLSYHLAYGVIYRE.

Belongs to the methyltransferase superfamily.

It carries out the reaction malonyl-[ACP] + S-adenosyl-L-methionine = malonyl-[ACP] methyl ester + S-adenosyl-L-homocysteine. The protein operates within cofactor biosynthesis; biotin biosynthesis. Functionally, converts the free carboxyl group of a malonyl-thioester to its methyl ester by transfer of a methyl group from S-adenosyl-L-methionine (SAM). It allows to synthesize pimeloyl-ACP via the fatty acid synthetic pathway. The chain is Malonyl-[acyl-carrier protein] O-methyltransferase from Serratia marcescens.